The chain runs to 591 residues: tRNA 5-methylaminomethyl-2-thiouridine biosynthesis bifunctional protein MnmC (591 aa).

Residues M1 to P232 are tRNA (mnm(5)s(2)U34)-methyltransferase. The segment at I247 to L591 is FAD-dependent cmnm(5)s(2)U34 oxidoreductase.

It in the N-terminal section; belongs to the methyltransferase superfamily. tRNA (mnm(5)s(2)U34)-methyltransferase family. The protein in the C-terminal section; belongs to the DAO family. The cofactor is FAD.

The protein localises to the cytoplasm. The enzyme catalyses 5-aminomethyl-2-thiouridine(34) in tRNA + S-adenosyl-L-methionine = 5-methylaminomethyl-2-thiouridine(34) in tRNA + S-adenosyl-L-homocysteine + H(+). Its function is as follows. Catalyzes the last two steps in the biosynthesis of 5-methylaminomethyl-2-thiouridine (mnm(5)s(2)U) at the wobble position (U34) in tRNA. Catalyzes the FAD-dependent demodification of cmnm(5)s(2)U34 to nm(5)s(2)U34, followed by the transfer of a methyl group from S-adenosyl-L-methionine to nm(5)s(2)U34, to form mnm(5)s(2)U34. In Caulobacter vibrioides (strain ATCC 19089 / CIP 103742 / CB 15) (Caulobacter crescentus), this protein is tRNA 5-methylaminomethyl-2-thiouridine biosynthesis bifunctional protein MnmC.